We begin with the raw amino-acid sequence, 196 residues long: Ribonuclease HII (196 aa).

The RNase H type-2 domain occupies 15 to 196; it reads FILAGIDEAG…RLSFTKALYK (182 aa). A divalent metal cation contacts are provided by Asp-21, Glu-22, and Asp-112.

Belongs to the RNase HII family. Mn(2+) is required as a cofactor. Requires Mg(2+) as cofactor.

It is found in the cytoplasm. It carries out the reaction Endonucleolytic cleavage to 5'-phosphomonoester.. Functionally, endonuclease that specifically degrades the RNA of RNA-DNA hybrids. The chain is Ribonuclease HII from Rickettsia bellii (strain OSU 85-389).